The sequence spans 502 residues: Mannitol 2-dehydrogenase (502 aa).

NAD(+) is bound at residue 37–48; the sequence is IVHVGVGGFHRA.

It belongs to the mannitol dehydrogenase family. As to quaternary structure, monomer.

It catalyses the reaction D-mannitol + NAD(+) = D-fructose + NADH + H(+). Its function is as follows. Catalyzes the NAD(H)-dependent interconversion of D-fructose and D-mannitol in the mannitol metabolic pathway. This chain is Mannitol 2-dehydrogenase, found in Aspergillus terreus (strain NIH 2624 / FGSC A1156).